The chain runs to 316 residues: Small ribosomal subunit biogenesis GTPase RsgA (316 aa).

Residues 1 to 20 (MSKLSHQQQRRIHNHRQNKL) form a disordered region. The segment covering 8–18 (QQRRIHNHRQN) has biased composition (basic residues). One can recognise a CP-type G domain in the interval 92–251 (AGKLKPVASN…IIDTPGVRGF (160 aa)). Residues 139 to 142 (NKSD) and 193 to 201 (GQSGVGKSS) contribute to the GTP site. Zn(2+)-binding residues include Cys275, Cys280, His282, and Cys288.

This sequence belongs to the TRAFAC class YlqF/YawG GTPase family. RsgA subfamily. In terms of assembly, monomer. Associates with 30S ribosomal subunit, binds 16S rRNA. Zn(2+) serves as cofactor.

It localises to the cytoplasm. One of several proteins that assist in the late maturation steps of the functional core of the 30S ribosomal subunit. Helps release RbfA from mature subunits. May play a role in the assembly of ribosomal proteins into the subunit. Circularly permuted GTPase that catalyzes slow GTP hydrolysis, GTPase activity is stimulated by the 30S ribosomal subunit. This chain is Small ribosomal subunit biogenesis GTPase RsgA, found in Dichelobacter nodosus (strain VCS1703A).